The chain runs to 328 residues: V-type sodium ATPase subunit C (328 aa).

This sequence belongs to the V-ATPase V0D/AC39 subunit family.

In terms of biological role, involved in ATP-driven sodium extrusion. In Enterococcus hirae (strain ATCC 9790 / DSM 20160 / JCM 8729 / LMG 6399 / NBRC 3181 / NCIMB 6459 / NCDO 1258 / NCTC 12367 / WDCM 00089 / R), this protein is V-type sodium ATPase subunit C (ntpC).